The chain runs to 290 residues: MSAETTASGYIQHHLQNLTFGQLPNGSWGFAHSAAEAKEMGFWAFHVDTLGWSVALGVIFILLFRMAAKKATSGVPGALQNFVEVMVGFVDGSVKDSFHGRSPVIAPLALTIFVWVFLMNAIDLVPVDWIPQLAMLISGDQHIPFRAVSTTDPNATLGMALSVFALIIFYSIKVKGIGGFIGELTLHPFGSKNILVQALLIPVNFLLEFVTLVAKPISLALRLFGNMYAGELVFILIAVMFGSGLLWLSGMGVVLQWAWAVFHILIITLQAFIFMMLTIVYLSMAHEENH.

A run of 6 helical transmembrane segments spans residues 44–64 (AFHVDTLGWSVALGVIFILLF), 104–124 (VIAPLALTIFVWVFLMNAIDL), 161–181 (LSVFALIIFYSIKVKGIGGFI), 194–214 (ILVQALLIPVNFLLEFVTLVA), 233–253 (VFILIAVMFGSGLLWLSGMGV), and 260–280 (AVFHILIITLQAFIFMMLTIV).

Belongs to the ATPase A chain family. F-type ATPases have 2 components, CF(1) - the catalytic core - and CF(0) - the membrane proton channel. CF(1) has five subunits: alpha(3), beta(3), gamma(1), delta(1), epsilon(1). CF(0) has three main subunits: a(1), b(2) and c(9-12). The alpha and beta chains form an alternating ring which encloses part of the gamma chain. CF(1) is attached to CF(0) by a central stalk formed by the gamma and epsilon chains, while a peripheral stalk is formed by the delta and b chains.

The protein localises to the cell inner membrane. Functionally, key component of the proton channel; it plays a direct role in the translocation of protons across the membrane. The chain is ATP synthase subunit a from Pseudomonas fluorescens (strain ATCC BAA-477 / NRRL B-23932 / Pf-5).